Reading from the N-terminus, the 68-residue chain is Metallothionein-3 (68 aa).

Met1 carries the N-acetylmethionine modification. Positions Met1–Ser30 are beta. A divalent metal cation contacts are provided by Cys6, Cys8, Cys14, Cys16, Cys20, Cys22, Cys25, and Cys27. The interval Lys31–Gln68 is alpha. The residue at position 33 (Ser33) is a Phosphoserine. Positions 34, 35, 37, 38, 42, 45, 49, 51, 64, 66, and 67 each coordinate a divalent metal cation.

The protein belongs to the metallothionein superfamily. Type 1 family.

Its function is as follows. Binds heavy metals. Contains five zinc and one copper atoms per polypeptide chain and only a negligible amount of cadmium. The protein is Metallothionein-3 (MT3) of Bos mutus grunniens (Wild yak).